We begin with the raw amino-acid sequence, 627 residues long: Zinc finger protein 256 (627 aa).

Positions 14–96 (VTFEDVAVYF…QKTNPCEICG (83 aa)) constitute a KRAB domain. A disordered region spans residues 55-76 (GSGAGDEEAPYQQSTSPQRVSQ). Residues 65 to 75 (YQQSTSPQRVS) show a composition bias toward polar residues. C2H2-type zinc fingers lie at residues 90–112 (NPCEICGPVLRQILHLVEHQGTH), 239–261 (YMCSECGKSFSTSCSLSDHLRVH), 267–289 (YTCGECGKSYRQSSSLITHRRIH), 295–317 (HQCDECGKLFNRKYDLLIHQRVH), 323–345 (YKCSECGKSFSHSSSLITHQRIH), 351–373 (YECSECGKSFIHSSSLITHQRVH), 379–401 (YMCSECGKSFSQSCHLIKHRRLH), 407–429 (YECSECGKLFTYRSRFFQHQRVH), 435–457 (HECHECGKLFSRKFDLIVHERVH), 463–485 (YECSECGKSFTCKSYLISHWKVH), 491–513 (YECGECGKSFTHSSTLLQHQRVH), 519–541 (YECNECGKFFSQSSSLIRHRRSH), 547–569 (YECSECWKSFSNHSSLVKHRRVH), 575–597 (YECSECGKSFSQSSNLTNHQRIH), and 603–625 (YECSDCGKFFTFNSNLLKHQNVH).

Belongs to the krueppel C2H2-type zinc-finger protein family. As to quaternary structure, interacts with TRIM28.

The protein localises to the nucleus. In terms of biological role, transcriptional repressor that plays a role in cell proliferation. Requires TRIM28 for its activity. The sequence is that of Zinc finger protein 256 (ZNF256) from Homo sapiens (Human).